The chain runs to 179 residues: Translation initiation factor IF-3 (179 aa).

It belongs to the IF-3 family. As to quaternary structure, monomer.

It localises to the cytoplasm. Functionally, IF-3 binds to the 30S ribosomal subunit and shifts the equilibrium between 70S ribosomes and their 50S and 30S subunits in favor of the free subunits, thus enhancing the availability of 30S subunits on which protein synthesis initiation begins. This Zymomonas mobilis subsp. mobilis (strain ATCC 31821 / ZM4 / CP4) protein is Translation initiation factor IF-3.